A 375-amino-acid chain; its full sequence is Alanine racemase (375 aa).

Catalysis depends on lysine 41, which acts as the Proton acceptor; specific for D-alanine. Lysine 41 carries the post-translational modification N6-(pyridoxal phosphate)lysine. Arginine 141 lines the substrate pocket. Tyrosine 270 (proton acceptor; specific for L-alanine) is an active-site residue. A substrate-binding site is contributed by methionine 317.

The protein belongs to the alanine racemase family. The cofactor is pyridoxal 5'-phosphate.

It carries out the reaction L-alanine = D-alanine. It functions in the pathway amino-acid biosynthesis; D-alanine biosynthesis; D-alanine from L-alanine: step 1/1. Its function is as follows. Catalyzes the interconversion of L-alanine and D-alanine. May also act on other amino acids. This is Alanine racemase (alr) from Lactiplantibacillus plantarum (strain ATCC BAA-793 / NCIMB 8826 / WCFS1) (Lactobacillus plantarum).